Here is a 125-residue protein sequence, read N- to C-terminus: Probable 4-amino-4-deoxy-L-arabinose-phosphoundecaprenol flippase subunit ArnF (125 aa).

The Cytoplasmic portion of the chain corresponds to 1–2 (MG). A helical transmembrane segment spans residues 3 to 23 (VMWGLISVAIASLAQLSLGFA). Residues 24–33 (MMRLPSIAHP) lie on the Periplasmic side of the membrane. Residues 34 to 54 (LAFISGLGAFNAATLALFAGL) traverse the membrane as a helical segment. The Cytoplasmic segment spans residues 55-76 (AGYLVSVFCWQKTLHTLALSKA). The helical transmembrane segment at 77-97 (YALLSLSYVLVWVASMLLPGL) threads the bilayer. Topologically, residues 98–100 (QGA) are periplasmic. A helical membrane pass occupies residues 101 to 121 (FSLKAMLGVLCIMAGVMLIFL). Topologically, residues 122-125 (PARS) are cytoplasmic.

Belongs to the ArnF family. Heterodimer of ArnE and ArnF.

The protein resides in the cell inner membrane. It functions in the pathway bacterial outer membrane biogenesis; lipopolysaccharide biosynthesis. Translocates 4-amino-4-deoxy-L-arabinose-phosphoundecaprenol (alpha-L-Ara4N-phosphoundecaprenol) from the cytoplasmic to the periplasmic side of the inner membrane. The protein is Probable 4-amino-4-deoxy-L-arabinose-phosphoundecaprenol flippase subunit ArnF of Salmonella choleraesuis (strain SC-B67).